We begin with the raw amino-acid sequence, 198 residues long: Ion-translocating oxidoreductase complex subunit B (198 aa).

Residues 1–26 are hydrophobic; sequence MTTIMIAVLAIALLATLFGAILGFAS. The 59-residue stretch at 32–90 folds into the 4Fe-4S domain; the sequence is EADPIVDQIDAILPQTQCGQCGYPGCRPYAEAIANGDSINKCPPGGQATIEKLADLMGV. [4Fe-4S] cluster is bound by residues Cys-49, Cys-52, Cys-57, Cys-73, Cys-114, Cys-117, Cys-120, Cys-124, Cys-144, Cys-147, Cys-150, and Cys-154. 2 4Fe-4S ferredoxin-type domains span residues 105–134 and 135–164; these read KVAF…GGTK and ALHT…MIPL.

Belongs to the 4Fe4S bacterial-type ferredoxin family. RnfB subfamily. The complex is composed of six subunits: RnfA, RnfB, RnfC, RnfD, RnfE and RnfG. [4Fe-4S] cluster serves as cofactor.

It is found in the cell inner membrane. In terms of biological role, part of a membrane-bound complex that couples electron transfer with translocation of ions across the membrane. The chain is Ion-translocating oxidoreductase complex subunit B from Vibrio vulnificus (strain CMCP6).